A 201-amino-acid polypeptide reads, in one-letter code: Protein LIGHT-DEPENDENT SHORT HYPOCOTYLS 2 (201 aa).

Residues 1–14 (MDLISQNHNNRNPN) show a composition bias toward polar residues. Disordered stretches follow at residues 1-37 (MDLI…YENQ) and 151-201 (SRGV…GATQ). Residues 15-32 (TSLSTQTPSSFSSPPSSS) show a composition bias toward low complexity. The 128-residue stretch at 33–160 (RYENQKRRDW…SRGVSYEKKR (128 aa)) folds into the ALOG domain. The Nuclear localization signal signature appears at 158 to 162 (KKRKR).

Belongs to the plant homeotic and developmental regulators ALOG protein family.

The protein resides in the nucleus. Functionally, probable transcription regulator that acts as a developmental regulator by promoting cell growth in response to light. The chain is Protein LIGHT-DEPENDENT SHORT HYPOCOTYLS 2 (LSH2) from Arabidopsis thaliana (Mouse-ear cress).